The chain runs to 205 residues: MNPNLNIEQDNASEIIAGVDEAGRGPLAGPVVAAAVVVNQSIMIDDIKDSKVLSKSKRESCYDKITNNYYYSIGIASVQEIDKYNILEATKLACIRAVKNLAIIPTKVLVDGNMNFTDNRFISIVRGDQICYSIASASIVAKVTRDRMMQILHQEYPVYGWNQNCGYGTKLHIEAIKTYGQTIHHRVSFKFKGNINHSAILGNMV.

An RNase H type-2 domain is found at 14–201; it reads EIIAGVDEAG…KGNINHSAIL (188 aa). Positions 20, 21, and 111 each coordinate a divalent metal cation.

This sequence belongs to the RNase HII family. It depends on Mn(2+) as a cofactor. The cofactor is Mg(2+).

The protein localises to the cytoplasm. It carries out the reaction Endonucleolytic cleavage to 5'-phosphomonoester.. Its function is as follows. Endonuclease that specifically degrades the RNA of RNA-DNA hybrids. The polypeptide is Ribonuclease HII (Orientia tsutsugamushi (strain Ikeda) (Rickettsia tsutsugamushi)).